Consider the following 331-residue polypeptide: Ferredoxin--NADP reductase 2 (331 aa).

Residues Glu37, Gln45, Tyr50, Val90, Phe124, Asp285, and Thr326 each coordinate FAD.

This sequence belongs to the ferredoxin--NADP reductase type 2 family. Homodimer. Requires FAD as cofactor.

It carries out the reaction 2 reduced [2Fe-2S]-[ferredoxin] + NADP(+) + H(+) = 2 oxidized [2Fe-2S]-[ferredoxin] + NADPH. In Bacillus velezensis (strain DSM 23117 / BGSC 10A6 / LMG 26770 / FZB42) (Bacillus amyloliquefaciens subsp. plantarum), this protein is Ferredoxin--NADP reductase 2.